A 1606-amino-acid chain; its full sequence is Phosphatidylinositol 3,4,5-trisphosphate-dependent Rac exchanger 2 protein (1606 aa).

One can recognise a DH domain in the interval 23 to 214 (LRVCVLSELQ…KAVCSNINEA (192 aa)). The PH domain occupies 245-361 (EMLMCGVLLK…WFEAILKERE (117 aa)). DEP domains lie at 390-464 (CRQG…RFRY) and 491-566 (SLFT…FFSD). PDZ domains are found at residues 592–671 (KSLL…VLVS) and 677–754 (TVKI…QDSI). Positions 1581 to 1606 (GVRDRTPQSAPRLYKLCEPPPPAGEE) are disordered.

Interacts with RAC1. In terms of tissue distribution, isoform 1 is highly expressed in skeletal muscle, heart and placenta, absent from peripheral blood leukocytes. Isoform 2 is expressed in skeletal muscle, kidney, small intestine, and placenta. Isoform 3 is expressed in the heart.

Functionally, functions as a RAC1 guanine nucleotide exchange factor (GEF), activating Rac proteins by exchanging bound GDP for free GTP. Its activity is synergistically activated by phosphatidylinositol 3,4,5-trisphosphate and the beta gamma subunits of heterotrimeric G protein. Mediates the activation of RAC1 in a PI3K-dependent manner. May be an important mediator of Rac signaling, acting directly downstream of both G protein-coupled receptors and phosphoinositide 3-kinase. The polypeptide is Phosphatidylinositol 3,4,5-trisphosphate-dependent Rac exchanger 2 protein (Homo sapiens (Human)).